A 99-amino-acid polypeptide reads, in one-letter code: Putative membrane protein insertion efficiency factor (99 aa).

This sequence belongs to the UPF0161 family.

It localises to the cell membrane. In terms of biological role, could be involved in insertion of integral membrane proteins into the membrane. The protein is Putative membrane protein insertion efficiency factor of Corynebacterium glutamicum (strain ATCC 13032 / DSM 20300 / JCM 1318 / BCRC 11384 / CCUG 27702 / LMG 3730 / NBRC 12168 / NCIMB 10025 / NRRL B-2784 / 534).